The following is a 511-amino-acid chain: 2,3-bisphosphoglycerate-independent phosphoglycerate mutase (511 aa).

Mn(2+) is bound by residues D14 and S64. The active-site Phosphoserine intermediate is the S64. Substrate is bound by residues H125, 155-156, R187, R193, 259-262, and K333; these read RD and RADR. Mn(2+) is bound by residues D400, H404, D441, H442, and H460.

It belongs to the BPG-independent phosphoglycerate mutase family. Monomer. It depends on Mn(2+) as a cofactor.

It carries out the reaction (2R)-2-phosphoglycerate = (2R)-3-phosphoglycerate. The protein operates within carbohydrate degradation; glycolysis; pyruvate from D-glyceraldehyde 3-phosphate: step 3/5. Its function is as follows. Catalyzes the interconversion of 2-phosphoglycerate and 3-phosphoglycerate. The sequence is that of 2,3-bisphosphoglycerate-independent phosphoglycerate mutase from Pseudomonas putida (strain ATCC 47054 / DSM 6125 / CFBP 8728 / NCIMB 11950 / KT2440).